Consider the following 166-residue polypeptide: Phosphopantetheine adenylyltransferase (166 aa).

A substrate-binding site is contributed by Ser9. Residues Ser9 to Phe10 and His17 contribute to the ATP site. Substrate-binding residues include Lys41, Leu74, and Lys88. Residues Gly89–Arg91, Glu99, and Tyr123–Thr129 contribute to the ATP site.

This sequence belongs to the bacterial CoaD family. In terms of assembly, homohexamer. Mg(2+) is required as a cofactor.

The protein localises to the cytoplasm. It catalyses the reaction (R)-4'-phosphopantetheine + ATP + H(+) = 3'-dephospho-CoA + diphosphate. It participates in cofactor biosynthesis; coenzyme A biosynthesis; CoA from (R)-pantothenate: step 4/5. Functionally, reversibly transfers an adenylyl group from ATP to 4'-phosphopantetheine, yielding dephospho-CoA (dPCoA) and pyrophosphate. The chain is Phosphopantetheine adenylyltransferase from Paenarthrobacter aurescens (strain TC1).